The chain runs to 430 residues: 3-phosphoshikimate 1-carboxyvinyltransferase (430 aa).

Positions 21, 22, and 26 each coordinate 3-phosphoshikimate. Lysine 21 is a phosphoenolpyruvate binding site. Glycine 95 and arginine 123 together coordinate phosphoenolpyruvate. 3-phosphoshikimate-binding residues include threonine 167, glutamine 169, aspartate 315, and lysine 342. Phosphoenolpyruvate is bound at residue glutamine 169. Aspartate 315 (proton acceptor) is an active-site residue. Residues arginine 346 and arginine 390 each contribute to the phosphoenolpyruvate site.

It belongs to the EPSP synthase family. Monomer.

Its subcellular location is the cytoplasm. It carries out the reaction 3-phosphoshikimate + phosphoenolpyruvate = 5-O-(1-carboxyvinyl)-3-phosphoshikimate + phosphate. The protein operates within metabolic intermediate biosynthesis; chorismate biosynthesis; chorismate from D-erythrose 4-phosphate and phosphoenolpyruvate: step 6/7. Functionally, catalyzes the transfer of the enolpyruvyl moiety of phosphoenolpyruvate (PEP) to the 5-hydroxyl of shikimate-3-phosphate (S3P) to produce enolpyruvyl shikimate-3-phosphate and inorganic phosphate. This Endomicrobium trichonymphae protein is 3-phosphoshikimate 1-carboxyvinyltransferase.